Reading from the N-terminus, the 327-residue chain is GTPase Obg (327 aa).

The Obg domain occupies 1–159; sequence MQFIDQANII…WEVQLELKLL (159 aa). The region spanning 160–327 is the OBG-type G domain; that stretch reads AEVGIIGLPN…PLLSEVWKRI (168 aa). ATP is bound by residues 166–173, 191–195, 213–216, 280–283, and 309–311; these read GLPNAGKS, FTTLI, DIPG, NKME, and SSS. Positions 173 and 193 each coordinate Mg(2+).

The protein belongs to the TRAFAC class OBG-HflX-like GTPase superfamily. OBG GTPase family. Monomer. Mg(2+) serves as cofactor.

The protein resides in the cytoplasm. In terms of biological role, an essential GTPase which binds GTP, GDP and possibly (p)ppGpp with moderate affinity, with high nucleotide exchange rates and a fairly low GTP hydrolysis rate. Plays a role in control of the cell cycle, stress response, ribosome biogenesis and in those bacteria that undergo differentiation, in morphogenesis control. In Prochlorococcus marinus subsp. pastoris (strain CCMP1986 / NIES-2087 / MED4), this protein is GTPase Obg.